The chain runs to 463 residues: Glycine--tRNA ligase (463 aa).

Arg100 and Glu175 together coordinate substrate. ATP is bound by residues 207-209 (RNE), 217-222 (FRTREF), 291-292 (EL), and 335-338 (GADR). 222 to 226 (FEQME) contacts substrate. Residue 331 to 335 (EPSLG) participates in substrate binding.

It belongs to the class-II aminoacyl-tRNA synthetase family. Homodimer.

It localises to the cytoplasm. It carries out the reaction tRNA(Gly) + glycine + ATP = glycyl-tRNA(Gly) + AMP + diphosphate. Catalyzes the attachment of glycine to tRNA(Gly). This Clostridium tetani (strain Massachusetts / E88) protein is Glycine--tRNA ligase.